We begin with the raw amino-acid sequence, 366 residues long: tRNA-specific 2-thiouridylase MnmA (366 aa).

ATP is bound by residues 6-13 and Leu-32; that span reads AMSGGVDS. The active-site Nucleophile is Cys-101. Residues Cys-101 and Cys-198 are joined by a disulfide bond. Gly-125 is a binding site for ATP. Residues 148-150 are interaction with tRNA; that stretch reads KDQ. The active-site Cysteine persulfide intermediate is Cys-198.

The protein belongs to the MnmA/TRMU family.

It is found in the cytoplasm. It carries out the reaction S-sulfanyl-L-cysteinyl-[protein] + uridine(34) in tRNA + AH2 + ATP = 2-thiouridine(34) in tRNA + L-cysteinyl-[protein] + A + AMP + diphosphate + H(+). In terms of biological role, catalyzes the 2-thiolation of uridine at the wobble position (U34) of tRNA, leading to the formation of s(2)U34. The chain is tRNA-specific 2-thiouridylase MnmA from Nocardioides sp. (strain ATCC BAA-499 / JS614).